We begin with the raw amino-acid sequence, 271 residues long: Phosphate import ATP-binding protein PstB (271 aa).

The ABC transporter domain maps to 13 to 266; that stretch reads VRTAPVSEAE…PKHPYTEAYI (254 aa). 57-64 is a binding site for ATP; that stretch reads GPSGCGKS.

Belongs to the ABC transporter superfamily. Phosphate importer (TC 3.A.1.7) family. In terms of assembly, the complex is composed of two ATP-binding proteins (PstB), two transmembrane proteins (PstC and PstA) and a solute-binding protein (PstS).

The protein localises to the cell inner membrane. It carries out the reaction phosphate(out) + ATP + H2O = ADP + 2 phosphate(in) + H(+). In terms of biological role, part of the ABC transporter complex PstSACB involved in phosphate import. Responsible for energy coupling to the transport system. The sequence is that of Phosphate import ATP-binding protein PstB from Thermus thermophilus (strain ATCC 27634 / DSM 579 / HB8).